A 27-amino-acid polypeptide reads, in one-letter code: Protamine-B (27 aa).

Residues 1–27 (ARRRRRSSRPQRRRRRRRHGRRRRGRR) form a disordered region.

Testis.

It localises to the nucleus. The protein resides in the chromosome. Its function is as follows. Protamines substitute for histones in the chromatin of sperm during the haploid phase of spermatogenesis. They compact sperm DNA into a highly condensed, stable and inactive complex. This Acipenser stellatus (Sevruga) protein is Protamine-B.